Reading from the N-terminus, the 598-residue chain is F-box/WD repeat-containing protein 8 (598 aa).

Methionine 1 is subject to N-acetylmethionine. The interval serine 20–proline 97 is disordered. The segment covering leucine 29–alanine 44 has biased composition (basic and acidic residues). The span at glycine 51–arginine 65 shows a compositional bias: low complexity. Over residues arginine 73–threonine 93 the composition is skewed to basic and acidic residues. Serine 84 carries the phosphoserine modification. Serine 86 carries the phosphoserine; by MTOR modification. Residues proline 113–leucine 159 form the F-box domain. WD repeat units follow at residues alanine 201 to glutamate 250, glutamine 259 to aspartate 299, alanine 300 to glutamate 340, valine 341 to valine 383, tyrosine 384 to glycine 429, asparagine 430 to glutamine 475, leucine 476 to serine 513, and arginine 514 to phenylalanine 561.

As to quaternary structure, component of the Cul7-RING(FBXW8) complex consisting of CUL7, RBX1, SKP1 and FBXW8; within the complex interacts with CUL7 and SKP1. Interacts with GLMN isoform 1. Interacts with OBSL1, CUL1, CUL2, CCT6B, PFDN5, CCT2, CCT3, CCT6A, CCT7, VBP1, CCDC8, ARF1, TRIP13, PDCD5 and GORASP1. Interacts with MAP4K1/HPK1 (when autophosphorylated). Associated component of the 3M complex. Interacts with POUF51 (when phosphorylated on 'Ser-347'). Phosphorylation at Ser-86 by mTORC2 promotes FBXW8 stabilization, allowing its translocation to the cytosol in response to insulin. Widely expressed. Expressed at higher level in skeletal muscle, cartilage and lung.

It is found in the cytoplasm. The protein localises to the perinuclear region. The protein resides in the golgi apparatus. Its subcellular location is the cytosol. It participates in protein modification; protein ubiquitination. Substrate-recognition component of the Cul7-RING(FBXW8) ubiquitin ligase complex, which mediates the ubiquitination and subsequent proteasomal degradation of target proteins. The Cul7-RING(FBXW8) complex mediates ubiquitination and consequent degradation of GORASP1, acting as a component of the ubiquitin ligase pathway that regulates Golgi morphogenesis and dendrite patterning in brain. Mediates ubiquitination and degradation of IRS1 in a mTOR-dependent manner: the Cul7-RING(FBXW8) complex recognizes and binds IRS1 previously phosphorylated by S6 kinase (RPS6KB1 or RPS6KB2). The Cul7-RING(FBXW8) complex also mediates ubiquitination of MAP4K1/HPK1: recognizes and binds autophosphorylated MAP4K1/HPK1, leading to its degradation, thereby affecting cell proliferation and differentiation. The Cul7-RING(FBXW8) complex also mediates ubiquitination of phosphorylated cyclin-D1 (CCND1). The Cul7-RING(FBXW8) complex is however not a major regulator of CCND1 stability during the G1/S transition. Associated component of the 3M complex, suggesting that it mediates some of 3M complex functions. This is F-box/WD repeat-containing protein 8 (Fbxw8) from Mus musculus (Mouse).